Consider the following 119-residue polypeptide: Protein FAM24A-like (119 aa).

An N-terminal signal peptide occupies residues 1–40 (MYKPFDLRTIITIIIGCGILTAMFLLIGLVLCLYSKISKA).

This sequence belongs to the FAM24 family.

It is found in the secreted. The chain is Protein FAM24A-like from Mus musculus (Mouse).